Reading from the N-terminus, the 385-residue chain is Protein pelota homolog (385 aa).

Residue Lys162 forms a Glycyl lysine isopeptide (Lys-Gly) (interchain with G-Cter in SUMO2) linkage. A phosphoserine mark is found at Ser374, Ser380, Ser381, and Ser382.

The protein belongs to the eukaryotic release factor 1 family. Pelota subfamily. In terms of assembly, component of the Pelota-HBS1L complex, also named Dom34-Hbs1 complex, composed of PELO and HBS1L. Interacts with PINK1. Interacts with ABCE1. Interacts with CNOT4. The cofactor is a divalent metal cation. As to expression, ubiquitously expressed.

The protein resides in the cytoplasm. Functionally, component of the Pelota-HBS1L complex, a complex that recognizes stalled ribosomes and triggers the No-Go Decay (NGD) pathway. In the Pelota-HBS1L complex, PELO recognizes ribosomes stalled at the 3' end of an mRNA and engages stalled ribosomes by destabilizing mRNA in the mRNA channel. Following mRNA extraction from stalled ribosomes by the SKI complex, the Pelota-HBS1L complex promotes recruitment of ABCE1, which drives the disassembly of stalled ribosomes, followed by degradation of damaged mRNAs as part of the NGD pathway. As part of the PINK1-regulated signaling, upon mitochondrial damage is recruited to the ribosome/mRNA-ribonucleoprotein complex associated to mitochondrial outer membrane thereby enabling the recruitment of autophagy receptors and induction of mitophagy. This is Protein pelota homolog from Homo sapiens (Human).